The sequence spans 562 residues: Dihydroxy-acid dehydratase (562 aa).

Residue D78 participates in Mg(2+) binding. C119 contributes to the [2Fe-2S] cluster binding site. Mg(2+)-binding residues include D120 and K121. At K121 the chain carries N6-carboxylysine. Residue C192 coordinates [2Fe-2S] cluster. E449 is a Mg(2+) binding site. The active-site Proton acceptor is S475.

This sequence belongs to the IlvD/Edd family. As to quaternary structure, homodimer. It depends on [2Fe-2S] cluster as a cofactor. Requires Mg(2+) as cofactor.

It carries out the reaction (2R)-2,3-dihydroxy-3-methylbutanoate = 3-methyl-2-oxobutanoate + H2O. It catalyses the reaction (2R,3R)-2,3-dihydroxy-3-methylpentanoate = (S)-3-methyl-2-oxopentanoate + H2O. The protein operates within amino-acid biosynthesis; L-isoleucine biosynthesis; L-isoleucine from 2-oxobutanoate: step 3/4. It participates in amino-acid biosynthesis; L-valine biosynthesis; L-valine from pyruvate: step 3/4. Its function is as follows. Functions in the biosynthesis of branched-chain amino acids. Catalyzes the dehydration of (2R,3R)-2,3-dihydroxy-3-methylpentanoate (2,3-dihydroxy-3-methylvalerate) into 2-oxo-3-methylpentanoate (2-oxo-3-methylvalerate) and of (2R)-2,3-dihydroxy-3-methylbutanoate (2,3-dihydroxyisovalerate) into 2-oxo-3-methylbutanoate (2-oxoisovalerate), the penultimate precursor to L-isoleucine and L-valine, respectively. The chain is Dihydroxy-acid dehydratase from Aliarcobacter butzleri (strain RM4018) (Arcobacter butzleri).